Consider the following 333-residue polypeptide: UDP-N-acetylglucosamine--N-acetylmuramyl-(pentapeptide) pyrophosphoryl-undecaprenol N-acetylglucosamine transferase (333 aa).

Residues 10 to 12 (TGG), asparagine 124, serine 177, and glutamine 275 each bind UDP-N-acetyl-alpha-D-glucosamine.

This sequence belongs to the glycosyltransferase 28 family. MurG subfamily.

It is found in the cell inner membrane. It catalyses the reaction di-trans,octa-cis-undecaprenyl diphospho-N-acetyl-alpha-D-muramoyl-L-alanyl-D-glutamyl-meso-2,6-diaminopimeloyl-D-alanyl-D-alanine + UDP-N-acetyl-alpha-D-glucosamine = di-trans,octa-cis-undecaprenyl diphospho-[N-acetyl-alpha-D-glucosaminyl-(1-&gt;4)]-N-acetyl-alpha-D-muramoyl-L-alanyl-D-glutamyl-meso-2,6-diaminopimeloyl-D-alanyl-D-alanine + UDP + H(+). Its pathway is cell wall biogenesis; peptidoglycan biosynthesis. Functionally, cell wall formation. Catalyzes the transfer of a GlcNAc subunit on undecaprenyl-pyrophosphoryl-MurNAc-pentapeptide (lipid intermediate I) to form undecaprenyl-pyrophosphoryl-MurNAc-(pentapeptide)GlcNAc (lipid intermediate II). The sequence is that of UDP-N-acetylglucosamine--N-acetylmuramyl-(pentapeptide) pyrophosphoryl-undecaprenol N-acetylglucosamine transferase from Nitratiruptor sp. (strain SB155-2).